The sequence spans 427 residues: Gamma-glutamyl phosphate reductase (427 aa).

The protein belongs to the gamma-glutamyl phosphate reductase family.

It localises to the cytoplasm. It catalyses the reaction L-glutamate 5-semialdehyde + phosphate + NADP(+) = L-glutamyl 5-phosphate + NADPH + H(+). The protein operates within amino-acid biosynthesis; L-proline biosynthesis; L-glutamate 5-semialdehyde from L-glutamate: step 2/2. In terms of biological role, catalyzes the NADPH-dependent reduction of L-glutamate 5-phosphate into L-glutamate 5-semialdehyde and phosphate. The product spontaneously undergoes cyclization to form 1-pyrroline-5-carboxylate. This chain is Gamma-glutamyl phosphate reductase, found in Rhizobium rhizogenes (strain K84 / ATCC BAA-868) (Agrobacterium radiobacter).